Consider the following 419-residue polypeptide: Peptide chain release factor subunit 1 (419 aa).

The protein belongs to the eukaryotic release factor 1 family. Heterodimer of two subunits, one of which binds GTP.

The protein localises to the cytoplasm. Functionally, directs the termination of nascent peptide synthesis (translation) in response to the termination codons UAA, UAG and UGA. The polypeptide is Peptide chain release factor subunit 1 (Methanococcus maripaludis (strain C7 / ATCC BAA-1331)).